We begin with the raw amino-acid sequence, 147 residues long: MATMRRICFLFVFNLAVATSTQGISDEISPDIPETSQAVIDGHRLKGSSKVSKATTGSEERFIRSQLQFLINKIFGARGVAKVLVEEGPKSGVFNKLKEILVKISKFEMKGDMLYMVYIYTILFLSIPIILGVAMYINHHVESSYIH.

The N-terminal stretch at 1–23 (MATMRRICFLFVFNLAVATSTQG) is a signal peptide. Positions 58–61 (SEER) match the dEER motif. The chain crosses the membrane as a helical span at residues 117-137 (VYIYTILFLSIPIILGVAMYI).

The protein belongs to the RxLR effector family. As to quaternary structure, interacts with host transcription factor NAC069.

The protein localises to the secreted. It localises to the host membrane. Its function is as follows. Secreted effector that inhibits stress-induced relocalization of the transcription factor NAC069 to the nucleus, thus affecting its broad role in abiotic and biotic stress responses. This chain is Secreted RxLR effector protein BLN04, found in Bremia lactucae (Lettuce downy mildew).